The primary structure comprises 317 residues: Ribosomal protein L11 methyltransferase (317 aa).

S-adenosyl-L-methionine contacts are provided by Thr169, Gly190, Asp211, and Asn256.

This sequence belongs to the methyltransferase superfamily. PrmA family.

The protein resides in the cytoplasm. The enzyme catalyses L-lysyl-[protein] + 3 S-adenosyl-L-methionine = N(6),N(6),N(6)-trimethyl-L-lysyl-[protein] + 3 S-adenosyl-L-homocysteine + 3 H(+). Its function is as follows. Methylates ribosomal protein L11. The polypeptide is Ribosomal protein L11 methyltransferase (Helicobacter hepaticus (strain ATCC 51449 / 3B1)).